A 152-amino-acid polypeptide reads, in one-letter code: Regulatory protein RecX (152 aa).

It belongs to the RecX family.

It localises to the cytoplasm. In terms of biological role, modulates RecA activity. This Haemophilus influenzae (strain PittGG) protein is Regulatory protein RecX.